The primary structure comprises 104 residues: L-rhamnose mutarotase (104 aa).

Tyrosine 18 is a binding site for substrate. Catalysis depends on histidine 22, which acts as the Proton donor. Substrate is bound by residues tyrosine 41 and 76-77 (WW).

This sequence belongs to the rhamnose mutarotase family. Homodimer.

It is found in the cytoplasm. The enzyme catalyses alpha-L-rhamnose = beta-L-rhamnose. Its pathway is carbohydrate metabolism; L-rhamnose metabolism. Functionally, involved in the anomeric conversion of L-rhamnose. In Sinorhizobium medicae (strain WSM419) (Ensifer medicae), this protein is L-rhamnose mutarotase.